Here is a 304-residue protein sequence, read N- to C-terminus: ATP phosphoribosyltransferase (304 aa).

This sequence belongs to the ATP phosphoribosyltransferase family. Long subfamily. Requires Mg(2+) as cofactor.

It is found in the cytoplasm. The enzyme catalyses 1-(5-phospho-beta-D-ribosyl)-ATP + diphosphate = 5-phospho-alpha-D-ribose 1-diphosphate + ATP. It functions in the pathway amino-acid biosynthesis; L-histidine biosynthesis; L-histidine from 5-phospho-alpha-D-ribose 1-diphosphate: step 1/9. With respect to regulation, feedback inhibited by histidine. Its function is as follows. Catalyzes the condensation of ATP and 5-phosphoribose 1-diphosphate to form N'-(5'-phosphoribosyl)-ATP (PR-ATP). Has a crucial role in the pathway because the rate of histidine biosynthesis seems to be controlled primarily by regulation of HisG enzymatic activity. This Xanthomonas oryzae pv. oryzae (strain MAFF 311018) protein is ATP phosphoribosyltransferase.